Consider the following 228-residue polypeptide: Ribosomal RNA small subunit methyltransferase G (228 aa).

Residues Gly-70, 121 to 122 (AE), and Arg-138 each bind S-adenosyl-L-methionine.

Belongs to the methyltransferase superfamily. RNA methyltransferase RsmG family.

The protein resides in the cytoplasm. Its function is as follows. Specifically methylates the N7 position of a guanine in 16S rRNA. The sequence is that of Ribosomal RNA small subunit methyltransferase G from Thermotoga petrophila (strain ATCC BAA-488 / DSM 13995 / JCM 10881 / RKU-1).